Consider the following 108-residue polypeptide: MTEATLAEWHPLGAIDEFTEDEPAARVAGQKPIAVFRIGDELFAMHDLCSHGHARLSEGYVEDGCVECPLHQGLIDIRTGAPKCAPITEPVRVYPIRIVDGQVEVNVG.

The 97-residue stretch at 9-105 (WHPLGAIDEF…IRIVDGQVEV (97 aa)) folds into the Rieske domain. Cys49, His51, Cys68, and His71 together coordinate [2Fe-2S] cluster.

The protein belongs to the bacterial ring-hydroxylating dioxygenase ferredoxin component family. In terms of assembly, part of a multicomponent enzyme system composed of a reductase (AndAa), a ferredoxin (AndAb) and a two-subunit oxygenase component (AndAc and AndAd). [2Fe-2S] cluster serves as cofactor.

Its pathway is aromatic compound metabolism; anthranilate degradation via hydroxylation; catechol from anthranilate: step 1/1. Part of the multicomponent anthranilate dioxygenase, that converts anthranilate to catechol. This protein seems to be a 2Fe-2S ferredoxin. This chain is Anthranilate 1,2-dioxygenase ferredoxin subunit, found in Burkholderia cepacia (Pseudomonas cepacia).